The primary structure comprises 566 residues: Glucose starvation modulator protein 1 (566 aa).

Residues 20-48 constitute a DNA-binding region (zn(2)-C6 fungal-type); the sequence is CVFCHQKHLQCSNERPCKNCVKRNIAHGC. Disordered stretches follow at residues 65 to 93 and 250 to 270; these read PGAV…PMDS and KQAS…NTLS. Positions 83-93 are enriched in polar residues; that stretch reads PVSTSVSPMDS. Residues 253 to 270 show a composition bias toward low complexity; the sequence is SPSPSNTSTSENNTNTLS.

It belongs to the ERT1/acuK family.

It localises to the nucleus. In terms of biological role, transcription factor which regulates nonfermentable carbon utilization. This Candida albicans (strain SC5314 / ATCC MYA-2876) (Yeast) protein is Glucose starvation modulator protein 1 (ZCF23).